Consider the following 557-residue polypeptide: MSNPRHNEREVRSPRGDELNAKSWLTEAPLRMLMNNLDPDVAERPHELVVYGGIGRAARTWDDFDRIVATLKTLNDDETLLVQSGKPVGVFRTHKDAPRVLIANSNLVPHWANWDHFNELDKKGLAMYGQMTAGSWIYIGAQGIVQGTYETFVEAGRQHYGGNLKGRWILTGGLGGMGGAQPLAAVMAGACCLAVECDETRADFRLRTRYVDEKTHSLDEALAKIDAWTKAGEAKSIALIGNAAEIFPELVKRGVKPDIVTDQTSAHDPVHGYLPLGWTVAEWRAKQENDPKAVEKAARASMKVQVQAMLDFWNAGIPTVDYGNNIRQMALEEGLENAFAFPGFVPAYIRPLFCRGIGPFRWAALSGDPEDIAKTDAKVKELLPDNKHLHNWLDMAKERIAFQGLPARICWVGLGDRHRLGLAFNEMVRNGELKAPIVIGRDHLDSGSVASPNRETEAMKDGSDAVSDWPLLNALLNTASGATWVSLHHGGGVGMGFSQHAGMVICCDGTEDADRRLERVLWNDPATGVMRHADAGYDIALDWARKQGLRLPAILGN.

The tract at residues 1–20 is disordered; that stretch reads MSNPRHNEREVRSPRGDELN. Residues 52–53, Gln-130, 176–178, Glu-196, Arg-201, 242–243, 263–267, 273–274, and Tyr-322 each bind NAD(+); these read GG, GMG, NA, QTSAH, and YL. The active site involves Cys-410. Gly-492 lines the NAD(+) pocket.

It belongs to the urocanase family. NAD(+) is required as a cofactor.

Its subcellular location is the cytoplasm. The enzyme catalyses 4-imidazolone-5-propanoate = trans-urocanate + H2O. It participates in amino-acid degradation; L-histidine degradation into L-glutamate; N-formimidoyl-L-glutamate from L-histidine: step 2/3. Catalyzes the conversion of urocanate to 4-imidazolone-5-propionate. The protein is Urocanate hydratase of Brucella ovis (strain ATCC 25840 / 63/290 / NCTC 10512).